Consider the following 88-residue polypeptide: Putative regulatory protein DvMF_1139 (88 aa).

Belongs to the RemA family.

The protein is Putative regulatory protein DvMF_1139 of Nitratidesulfovibrio vulgaris (strain DSM 19637 / Miyazaki F) (Desulfovibrio vulgaris).